A 337-amino-acid polypeptide reads, in one-letter code: Phenylalanine--tRNA ligase alpha subunit (337 aa).

Residue glutamate 252 coordinates Mg(2+).

It belongs to the class-II aminoacyl-tRNA synthetase family. Phe-tRNA synthetase alpha subunit type 1 subfamily. Tetramer of two alpha and two beta subunits. It depends on Mg(2+) as a cofactor.

The protein localises to the cytoplasm. It carries out the reaction tRNA(Phe) + L-phenylalanine + ATP = L-phenylalanyl-tRNA(Phe) + AMP + diphosphate + H(+). This is Phenylalanine--tRNA ligase alpha subunit from Saccharophagus degradans (strain 2-40 / ATCC 43961 / DSM 17024).